Reading from the N-terminus, the 82-residue chain is Sec-independent protein translocase protein TatA (82 aa).

Residues 1–21 (MGGISIWQLLIIAVIIVLLFG) traverse the membrane as a helical segment. Residues 46–82 (DEPAKDAKKDADFVPQNLEKKEAETVEKQKQNDKEQA) form a disordered region.

This sequence belongs to the TatA/E family. As to quaternary structure, the Tat system comprises two distinct complexes: a TatABC complex, containing multiple copies of TatA, TatB and TatC subunits, and a separate TatA complex, containing only TatA subunits. Substrates initially bind to the TatABC complex, which probably triggers association of the separate TatA complex to form the active translocon.

Its subcellular location is the cell inner membrane. Part of the twin-arginine translocation (Tat) system that transports large folded proteins containing a characteristic twin-arginine motif in their signal peptide across membranes. TatA could form the protein-conducting channel of the Tat system. This Aliivibrio fischeri (strain MJ11) (Vibrio fischeri) protein is Sec-independent protein translocase protein TatA.